The primary structure comprises 56 residues: Ovomucoid (56 aa).

A Kazal-like domain is found at 6–56; it reads VDCSEYPKPDCTTEERPLCGSDNKTYGNKCNFCNAVVESNGTLTLSHFGKC. Intrachain disulfides connect cysteine 8-cysteine 38, cysteine 16-cysteine 35, and cysteine 24-cysteine 56. The N-linked (GlcNAc...) asparagine glycan is linked to asparagine 45.

It is found in the secreted. The chain is Ovomucoid from Francolinus pondicerianus (Grey francolin).